Reading from the N-terminus, the 725-residue chain is Phosphatase and actin regulator 4A (725 aa).

Residues 1–12 (MGQGASTQTLNP) show a composition bias toward polar residues. Residues 1–597 (MGQGASTQTL…SSTWNNKEQW (597 aa)) are disordered. Basic residues predominate over residues 55–64 (KPWKWRKKKT). Composition is skewed to basic and acidic residues over residues 65–100 (SDKF…KDIP), 124–147 (GDRK…GERK), and 155–164 (KRNDGTERMT). The RPEL 1 repeat unit spans residues 75–100 (LVLERKMSVRKPREELIERGLLKDIP). Polar residues predominate over residues 166–177 (MIQSFQKMSLMQ). Residues 212–221 (VIAAPSSAEP) are compositionally biased toward low complexity. The span at 222–235 (APVPPPPIAKPPPR) shows a compositional bias: pro residues. 2 stretches are compositionally biased toward low complexity: residues 265–276 (PAHTTPATVSTH) and 292–313 (PAHV…LLKQ). A compositionally biased stretch (polar residues) spans 359–368 (TPVTKRNSGD). Residues 374–384 (PEPPPPAPTSV) show a composition bias toward pro residues. Positions 385-401 (PIPAAAPISAPPSTQSD) are enriched in low complexity. Positions 402-417 (PPSPTTEPPSQPPPLP) are enriched in pro residues. Over residues 497-510 (QKPELEPRSRRGLV) the composition is skewed to basic and acidic residues. Composition is skewed to acidic residues over residues 522–536 (AGSE…ESDS) and 545–554 (DNEEDDDEED). A compositionally biased stretch (basic and acidic residues) spans 567-585 (KDTLALKLERQQEKEKSQE). RPEL repeat units follow at residues 606 to 631 (TALT…LAKN) and 644 to 669 (RRLT…RFHE).

The protein belongs to the phosphatase and actin regulator family. In terms of assembly, binds ppp1ca and actin.

It is found in the cytoplasm. The protein resides in the cell projection. Its subcellular location is the lamellipodium. Its function is as follows. Regulator of protein phosphatase 1 (PP1) required for neural tube and optic fissure closure, and enteric neural crest cell (ENCCs) migration during development. Acts as an activator of PP1. During neural tube closure, localizes to the ventral neural tube and activates PP1, leading to down-regulate cell proliferation within cranial neural tissue and the neural retina. Also acts as a regulator of migration of enteric neural crest cells (ENCCs) by activating PP1, leading to repression of the integrin signaling through the rho/rock pathway. In Danio rerio (Zebrafish), this protein is Phosphatase and actin regulator 4A (phactr4a).